The sequence spans 875 residues: Alanine--tRNA ligase (875 aa).

Zn(2+) is bound by residues His-564, His-568, Cys-666, and His-670.

Belongs to the class-II aminoacyl-tRNA synthetase family. Zn(2+) is required as a cofactor.

It localises to the cytoplasm. The catalysed reaction is tRNA(Ala) + L-alanine + ATP = L-alanyl-tRNA(Ala) + AMP + diphosphate. Its function is as follows. Catalyzes the attachment of alanine to tRNA(Ala) in a two-step reaction: alanine is first activated by ATP to form Ala-AMP and then transferred to the acceptor end of tRNA(Ala). Also edits incorrectly charged Ser-tRNA(Ala) and Gly-tRNA(Ala) via its editing domain. In Mannheimia succiniciproducens (strain KCTC 0769BP / MBEL55E), this protein is Alanine--tRNA ligase.